Here is a 393-residue protein sequence, read N- to C-terminus: Elongation factor Tu (393 aa).

Positions 10 to 203 constitute a tr-type G domain; it reads KPHVNIGTIG…AVDDYIPEPV (194 aa). The segment at 19–26 is G1; it reads GHVDHGKT. 19–26 serves as a coordination point for GTP; it reads GHVDHGKT. Thr-26 is a Mg(2+) binding site. The tract at residues 60–64 is G2; the sequence is GITIS. The G3 stretch occupies residues 81–84; sequence DCPG. GTP-binding positions include 81–85 and 136–139; these read DCPGH and NKVD. A G4 region spans residues 136–139; the sequence is NKVD. The tract at residues 173 to 175 is G5; sequence SAL.

Belongs to the TRAFAC class translation factor GTPase superfamily. Classic translation factor GTPase family. EF-Tu/EF-1A subfamily. In terms of assembly, monomer.

It localises to the cytoplasm. It carries out the reaction GTP + H2O = GDP + phosphate + H(+). Functionally, GTP hydrolase that promotes the GTP-dependent binding of aminoacyl-tRNA to the A-site of ribosomes during protein biosynthesis. In Chlorobium phaeobacteroides (strain BS1), this protein is Elongation factor Tu.